We begin with the raw amino-acid sequence, 222 residues long: Probable transaldolase 2 (222 aa).

The active-site Schiff-base intermediate with substrate is the Lys90.

The protein belongs to the transaldolase family. Type 3B subfamily.

Its subcellular location is the cytoplasm. The enzyme catalyses D-sedoheptulose 7-phosphate + D-glyceraldehyde 3-phosphate = D-erythrose 4-phosphate + beta-D-fructose 6-phosphate. It functions in the pathway carbohydrate degradation; pentose phosphate pathway; D-glyceraldehyde 3-phosphate and beta-D-fructose 6-phosphate from D-ribose 5-phosphate and D-xylulose 5-phosphate (non-oxidative stage): step 2/3. In terms of biological role, transaldolase is important for the balance of metabolites in the pentose-phosphate pathway. In Bacillus anthracis, this protein is Probable transaldolase 2.